Consider the following 89-residue polypeptide: Small ribosomal subunit protein bS20 (89 aa).

The protein belongs to the bacterial ribosomal protein bS20 family.

In terms of biological role, binds directly to 16S ribosomal RNA. The protein is Small ribosomal subunit protein bS20 of Phenylobacterium zucineum (strain HLK1).